The primary structure comprises 434 residues: Cobyrinate a,c-diamide synthase (434 aa).

Positions 240-430 (KAYVAYDSAF…SHFHFSRTRR (191 aa)) constitute a GATase cobBQ-type domain. Cys-322 (nucleophile) is an active-site residue.

Belongs to the CobB/CbiA family. It depends on Mg(2+) as a cofactor.

The enzyme catalyses cob(II)yrinate + 2 L-glutamine + 2 ATP + 2 H2O = cob(II)yrinate a,c diamide + 2 L-glutamate + 2 ADP + 2 phosphate + 2 H(+). The protein operates within cofactor biosynthesis; adenosylcobalamin biosynthesis; cob(II)yrinate a,c-diamide from sirohydrochlorin (anaerobic route): step 10/10. Its function is as follows. Catalyzes the ATP-dependent amidation of the two carboxylate groups at positions a and c of cobyrinate, using either L-glutamine or ammonia as the nitrogen source. The protein is Cobyrinate a,c-diamide synthase of Sulfolobus acidocaldarius (strain ATCC 33909 / DSM 639 / JCM 8929 / NBRC 15157 / NCIMB 11770).